We begin with the raw amino-acid sequence, 315 residues long: DNA-directed RNA polymerase subunit alpha (315 aa).

An alpha N-terminal domain (alpha-NTD) region spans residues M1–T228. Residues K245–E315 form an alpha C-terminal domain (alpha-CTD) region.

The protein belongs to the RNA polymerase alpha chain family. In terms of assembly, homodimer. The RNAP catalytic core consists of 2 alpha, 1 beta, 1 beta' and 1 omega subunit. When a sigma factor is associated with the core the holoenzyme is formed, which can initiate transcription.

The catalysed reaction is RNA(n) + a ribonucleoside 5'-triphosphate = RNA(n+1) + diphosphate. In terms of biological role, DNA-dependent RNA polymerase catalyzes the transcription of DNA into RNA using the four ribonucleoside triphosphates as substrates. The chain is DNA-directed RNA polymerase subunit alpha from Clostridium novyi (strain NT).